A 272-amino-acid polypeptide reads, in one-letter code: Formamidopyrimidine-DNA glycosylase (272 aa).

Pro2 serves as the catalytic Schiff-base intermediate with DNA. Residue Glu3 is the Proton donor of the active site. The active-site Proton donor; for beta-elimination activity is Lys56. Residues His89, Arg108, and Lys149 each contribute to the DNA site. The FPG-type zinc-finger motif lies at 234-268 (LAYGRAGEMCVNCETPLENLKLGQRASVFCPQCQP). Residue Arg258 is the Proton donor; for delta-elimination activity of the active site.

Belongs to the FPG family. In terms of assembly, monomer. It depends on Zn(2+) as a cofactor.

It carries out the reaction Hydrolysis of DNA containing ring-opened 7-methylguanine residues, releasing 2,6-diamino-4-hydroxy-5-(N-methyl)formamidopyrimidine.. The catalysed reaction is 2'-deoxyribonucleotide-(2'-deoxyribose 5'-phosphate)-2'-deoxyribonucleotide-DNA = a 3'-end 2'-deoxyribonucleotide-(2,3-dehydro-2,3-deoxyribose 5'-phosphate)-DNA + a 5'-end 5'-phospho-2'-deoxyribonucleoside-DNA + H(+). In terms of biological role, involved in base excision repair of DNA damaged by oxidation or by mutagenic agents. Acts as a DNA glycosylase that recognizes and removes damaged bases. Has a preference for oxidized purines, such as 7,8-dihydro-8-oxoguanine (8-oxoG). Has AP (apurinic/apyrimidinic) lyase activity and introduces nicks in the DNA strand. Cleaves the DNA backbone by beta-delta elimination to generate a single-strand break at the site of the removed base with both 3'- and 5'-phosphates. This chain is Formamidopyrimidine-DNA glycosylase, found in Acinetobacter baylyi (strain ATCC 33305 / BD413 / ADP1).